A 188-amino-acid chain; its full sequence is Elongation factor P (188 aa).

At Lys-34 the chain carries N6-(3,6-diaminohexanoyl)-5-hydroxylysine.

This sequence belongs to the elongation factor P family. In terms of processing, may be beta-lysylated on the epsilon-amino group of Lys-34 by the combined action of EpmA and EpmB, and then hydroxylated on the C5 position of the same residue by EpmC (if this protein is present). Lysylation is critical for the stimulatory effect of EF-P on peptide-bond formation. The lysylation moiety may extend toward the peptidyltransferase center and stabilize the terminal 3-CCA end of the tRNA. Hydroxylation of the C5 position on Lys-34 may allow additional potential stabilizing hydrogen-bond interactions with the P-tRNA.

It is found in the cytoplasm. It functions in the pathway protein biosynthesis; polypeptide chain elongation. Involved in peptide bond synthesis. Alleviates ribosome stalling that occurs when 3 or more consecutive Pro residues or the sequence PPG is present in a protein, possibly by augmenting the peptidyl transferase activity of the ribosome. Modification of Lys-34 is required for alleviation. This chain is Elongation factor P, found in Photorhabdus laumondii subsp. laumondii (strain DSM 15139 / CIP 105565 / TT01) (Photorhabdus luminescens subsp. laumondii).